Consider the following 409-residue polypeptide: Nitrogen permease regulator 2 homolog (409 aa).

This sequence belongs to the NPR2 family.

The protein resides in the cytoplasm. Its subcellular location is the nucleus. Mediates inactivation of the TORC1 complex in response to amino acid starvation. Post-transcriptional regulator of nitrogen permeases. The protein is Nitrogen permease regulator 2 homolog of Schizosaccharomyces pombe (strain 972 / ATCC 24843) (Fission yeast).